A 305-amino-acid polypeptide reads, in one-letter code: MAVQKYTVALFLAVALVAGPAALYAGDGYAPATPAASATLATPATPAASPQHAGTTEYHIVRKAGLNEEKNAARQTDDEQKRSDEINCPDFNKSVHCRADRLPVCSSTSAHSSKQDVAWMLGYGSIQGFSMDDASVGSVSSEFHVIESAIEVITYIGEEVKVIPAGEVEVINKVKAAFSTAATAADEAPANDKFTVFVSSFNKAIKETTGGAYAGYKFIPTLEAAVKQAYAASSATAPEVKYAVFETALKKAISAMSEAQKEAKPAAAISAATTTISASTATPAAPPPPQLGTATPAAVAGGYKV.

Positions 1–25 are cleaved as a signal peptide; the sequence is MAVQKYTVALFLAVALVAGPAALYA. The segment covering 65 to 85 has biased composition (basic and acidic residues); sequence GLNEEKNAARQTDDEQKRSDE. 2 disordered regions span residues 65–87 and 279–299; these read GLNEEKNAARQTDDEQKRSDEIN and STATPAAPPPPQLGTATPAAV.

Belongs to the Poa p IX/Phl p VI allergen family.

The sequence is that of Major pollen allergen Pha a 5.2 from Phalaris aquatica (Canary grass).